A 155-amino-acid chain; its full sequence is Ribosomal RNA large subunit methyltransferase H (155 aa).

S-adenosyl-L-methionine contacts are provided by residues leucine 72, glycine 103, and 122 to 127 (LSPLTL).

The protein belongs to the RNA methyltransferase RlmH family. Homodimer.

The protein resides in the cytoplasm. It catalyses the reaction pseudouridine(1915) in 23S rRNA + S-adenosyl-L-methionine = N(3)-methylpseudouridine(1915) in 23S rRNA + S-adenosyl-L-homocysteine + H(+). Specifically methylates the pseudouridine at position 1915 (m3Psi1915) in 23S rRNA. This Histophilus somni (strain 129Pt) (Haemophilus somnus) protein is Ribosomal RNA large subunit methyltransferase H.